A 177-amino-acid chain; its full sequence is Thymidine kinase (177 aa).

Position 11–18 (11–18) interacts with ATP; sequence GPMFSGKS. Glutamate 83 functions as the Proton acceptor in the catalytic mechanism. Phenylalanine 113 serves as a coordination point for substrate. Positions 138 and 141 each coordinate Zn(2+). 157–161 is a substrate binding site; the sequence is IEIIG. Zn(2+) contacts are provided by cysteine 170 and cysteine 173.

This sequence belongs to the thymidine kinase family. As to quaternary structure, homotetramer. Two molecules of substrate bind to each enzyme tetramer.

It carries out the reaction thymidine + ATP = dTMP + ADP + H(+). Its function is as follows. Phosphorylates thymidine and thymidine analogs, such as azidothymidine (AZT). Part of the salvage pathway for pyrimidine deoxyribonucleotide synthesis. This chain is Thymidine kinase (OPG101), found in Cynomys gunnisoni (Gunnison's prairie dog).